The chain runs to 372 residues: NAD(P)H-quinone oxidoreductase subunit 1 (372 aa).

8 consecutive transmembrane segments (helical) span residues Ala-27–Val-47, Trp-97–Val-117, Val-130–Gly-150, Leu-176–Val-196, Ile-204–Leu-224, Phe-254–Val-274, Ser-308–Leu-328, and Val-351–Gly-371.

Belongs to the complex I subunit 1 family. In terms of assembly, NDH-1 is composed of at least 11 different subunits.

Its subcellular location is the cellular thylakoid membrane. It carries out the reaction a plastoquinone + NADH + (n+1) H(+)(in) = a plastoquinol + NAD(+) + n H(+)(out). The enzyme catalyses a plastoquinone + NADPH + (n+1) H(+)(in) = a plastoquinol + NADP(+) + n H(+)(out). Its function is as follows. NDH-1 shuttles electrons from an unknown electron donor, via FMN and iron-sulfur (Fe-S) centers, to quinones in the respiratory and/or the photosynthetic chain. The immediate electron acceptor for the enzyme in this species is believed to be plastoquinone. Couples the redox reaction to proton translocation, and thus conserves the redox energy in a proton gradient. In Microcystis aeruginosa (strain NIES-843 / IAM M-2473), this protein is NAD(P)H-quinone oxidoreductase subunit 1.